The following is a 328-amino-acid chain: UPF0324 membrane protein AF_1621 (328 aa).

The next 11 helical transmembrane spans lie at 21–39, 43–60, 73–95, 101–123, 130–152, 162–184, 191–213, 223–240, 245–267, 271–293, and 305–327; these read LQMLLLLLLCGAAAYIINL, ALEPLFLALVFGIVAGNL, YVPFLLPIGITLYGVNINIPYLG, IVAATLISTSLIFLTVFWLSSRL, SILLACGSGICGVSAIAIISPLI, AIMIITAVGLTGAILYPSIAHYA, FAVLAGATLHQTGIVKISSQLFG, GIRIAMIALVVLILSIIY, FYVPWYIVSFLGVALFSSTYLPG, QALRPLATVMFATTLAAICYTVN, and LFASYAGWAVGVAFVLLLLGSGA.

This sequence belongs to the UPF0324 family.

The protein resides in the cell membrane. In Archaeoglobus fulgidus (strain ATCC 49558 / DSM 4304 / JCM 9628 / NBRC 100126 / VC-16), this protein is UPF0324 membrane protein AF_1621.